Here is a 307-residue protein sequence, read N- to C-terminus: Methionyl-tRNA formyltransferase (307 aa).

(6S)-5,6,7,8-tetrahydrofolate is bound at residue serine 108–proline 111.

This sequence belongs to the Fmt family.

The enzyme catalyses L-methionyl-tRNA(fMet) + (6R)-10-formyltetrahydrofolate = N-formyl-L-methionyl-tRNA(fMet) + (6S)-5,6,7,8-tetrahydrofolate + H(+). Functionally, attaches a formyl group to the free amino group of methionyl-tRNA(fMet). The formyl group appears to play a dual role in the initiator identity of N-formylmethionyl-tRNA by promoting its recognition by IF2 and preventing the misappropriation of this tRNA by the elongation apparatus. This chain is Methionyl-tRNA formyltransferase, found in Stenotrophomonas maltophilia (strain K279a).